Consider the following 235-residue polypeptide: Large ribosomal subunit protein uL1 (235 aa).

Belongs to the universal ribosomal protein uL1 family. In terms of assembly, part of the 50S ribosomal subunit.

Binds directly to 23S rRNA. The L1 stalk is quite mobile in the ribosome, and is involved in E site tRNA release. Functionally, protein L1 is also a translational repressor protein, it controls the translation of the L11 operon by binding to its mRNA. The protein is Large ribosomal subunit protein uL1 of Methylobacterium nodulans (strain LMG 21967 / CNCM I-2342 / ORS 2060).